Reading from the N-terminus, the 725-residue chain is MFDTQREELLWGGRKLVLETGKVARQADGAVVASYGETTVLATVVSMKEPKPGIDFLPLTVNYQERAYAAGRIPGGYFKREGRPSEKETLVSRLIDRPIRPLFVEGWRNDTQVVVTVLSHDLENDPDIVSMVAASAALTLSGVPFMGPIGAARVGYLGGQYKLNPTVQEMEESSLDLVVAGTDAAVLMVESEAKELPEDVMLGAVMFGHKHFQPVIEAIIRLAEKAAKEPRDFQPTDLTEVEKAVLEIGEADLREAYRKTVKQERYAAVDAVKAKVMAALVPEGGEAKFEPEKVKAAFKEVQAKVVRWNILDTGSRIDGRDVRTVRPILSEVGVLPRAHGSALFTRGETQALVVATLGTGDDEQFIDALEGTYKETFLLHYNFPPYSVGETGRMGSPGRREIGHGKLAWRAVHPLLPPAHEFPYTLRVVSEITESNGSSSMATVCGSSLALMDAGVPLRRPVAGIAMGLILEGERYAVLSDILGDEDHLGDMDFKVAGTEEGVTSLQMDIKIAGITEEIMRVALDQAKEGRAHILGEMAKALTAARPELGEHAPRIETMQIPTDKIREVIGTGGKVIREIVEKTGAKIDIQDTGVVKIASSDGKAIKAAYNWIRSIVAEPEAGMIYDGTVVKTMEFGAFVNFFGAKDGLVHISELAPQRVAKVTDVVKEGDKVKVKFLGQDERGKIRLSMKVVDQQTGEDLTEKLKAEREADRNRERQARQSAGE.

Positions 487 and 493 each coordinate Mg(2+). Positions 554–613 (PRIETMQIPTDKIREVIGTGGKVIREIVEKTGAKIDIQDTGVVKIASSDGKAIKAAYNWI) constitute a KH domain. Positions 623-691 (GMIYDGTVVK…ERGKIRLSMK (69 aa)) constitute an S1 motif domain. The interval 699–725 (EDLTEKLKAEREADRNRERQARQSAGE) is disordered. Residues 701 to 719 (LTEKLKAEREADRNRERQA) are compositionally biased toward basic and acidic residues.

It belongs to the polyribonucleotide nucleotidyltransferase family. The cofactor is Mg(2+).

The protein localises to the cytoplasm. The catalysed reaction is RNA(n+1) + phosphate = RNA(n) + a ribonucleoside 5'-diphosphate. In terms of biological role, involved in mRNA degradation. Catalyzes the phosphorolysis of single-stranded polyribonucleotides processively in the 3'- to 5'-direction. This chain is Polyribonucleotide nucleotidyltransferase, found in Methylobacterium sp. (strain 4-46).